Here is a 292-residue protein sequence, read N- to C-terminus: Elongation factor Ts (292 aa).

Positions 79 to 82 are involved in Mg(2+) ion dislocation from EF-Tu; it reads TDFV.

This sequence belongs to the EF-Ts family.

Its subcellular location is the cytoplasm. Functionally, associates with the EF-Tu.GDP complex and induces the exchange of GDP to GTP. It remains bound to the aminoacyl-tRNA.EF-Tu.GTP complex up to the GTP hydrolysis stage on the ribosome. This Xylella fastidiosa (strain 9a5c) protein is Elongation factor Ts.